The chain runs to 430 residues: Xaa-Pro aminopeptidase (430 aa).

5 residues coordinate Mn(2+): D254, D265, H348, E377, and E400.

Belongs to the peptidase M24B family. Homotetramer. It depends on Mn(2+) as a cofactor.

The catalysed reaction is Release of any N-terminal amino acid, including proline, that is linked to proline, even from a dipeptide or tripeptide.. This chain is Xaa-Pro aminopeptidase (pepP), found in Haemophilus influenzae (strain ATCC 51907 / DSM 11121 / KW20 / Rd).